Reading from the N-terminus, the 146-residue chain is Large ribosomal subunit protein uL15 (146 aa).

Residues 1-51 (MKLHELQPAPGSRKKAVRVGRGIGSGNGKTSGRGQKGQNARSGGGVRLGFE) are disordered. Gly residues-rich tracts occupy residues 21–35 (RGIG…GRGQ) and 42–51 (SGGGVRLGFE).

Belongs to the universal ribosomal protein uL15 family. Part of the 50S ribosomal subunit.

Binds to the 23S rRNA. The chain is Large ribosomal subunit protein uL15 from Geobacillus kaustophilus (strain HTA426).